Reading from the N-terminus, the 97-residue chain is Large ribosomal subunit protein bL31 (97 aa).

Positions 76–97 (KTPKKAKGKTEEYTKHRSLNEL) are disordered. Residues 83–97 (GKTEEYTKHRSLNEL) are compositionally biased toward basic and acidic residues.

The protein belongs to the bacterial ribosomal protein bL31 family. Type A subfamily. In terms of assembly, part of the 50S ribosomal subunit.

Its function is as follows. Binds the 23S rRNA. The chain is Large ribosomal subunit protein bL31 from Mycoplasma pneumoniae (strain ATCC 29342 / M129 / Subtype 1) (Mycoplasmoides pneumoniae).